Consider the following 323-residue polypeptide: Pantothenate kinase (323 aa).

The span at 1-12 shows a compositional bias: polar residues; the sequence is MAEQNAASTTGV. The interval 1–24 is disordered; that stretch reads MAEQNAASTTGVKPSPRTPDFSPY. 108–115 serves as a coordination point for ATP; that stretch reads GSVAVGKS.

This sequence belongs to the prokaryotic pantothenate kinase family.

It is found in the cytoplasm. It catalyses the reaction (R)-pantothenate + ATP = (R)-4'-phosphopantothenate + ADP + H(+). It participates in cofactor biosynthesis; coenzyme A biosynthesis; CoA from (R)-pantothenate: step 1/5. This is Pantothenate kinase from Corynebacterium glutamicum (strain R).